Here is a 1073-residue protein sequence, read N- to C-terminus: Lon protease homolog, mitochondrial (1073 aa).

A mitochondrion-targeting transit peptide spans 1-27 (MIKASKCNKARALFLVRTSIPRTFIRN). Composition is skewed to basic and acidic residues over residues 69-107 (FDSKKEKQPSTDKSNDKDKPSRKEKGKDKEKENEERKDI) and 113-123 (YDIKEETDSKP). The interval 69–173 (FDSKKEKQPS…DKEFLSPSDA (105 aa)) is disordered. A compositionally biased stretch (low complexity) spans 132–150 (SSKSSISSSSGGANNNNNN). The segment covering 158 to 167 (DDGSPKDKEF) has biased composition (basic and acidic residues). One can recognise a Lon N-terminal domain in the interval 177–395 (PPFLAIAMKD…LSLQLLQVEA (219 aa)). Residue 543 to 550 (GPPGTGKT) participates in ATP binding. Over residues 775 to 785 (SVISDKAKKDA) the composition is skewed to basic and acidic residues. The segment at 775–821 (SVISDKAKKDAGSSSIESNDSNTEAKVSTTTENEKKQEQKQKQDEEI) is disordered. Polar residues predominate over residues 790–805 (IESNDSNTEAKVSTTT). The span at 806–821 (ENEKKQEQKQKQDEEI) shows a compositional bias: basic and acidic residues. Residues 856–1044 (TLNPGVATGL…SEVFEHLFKG (189 aa)) form the Lon proteolytic domain. Residues Ser-950 and Lys-993 contribute to the active site.

This sequence belongs to the peptidase S16 family. In terms of assembly, homohexamer or homoheptamer. Organized in a ring with a central cavity.

The protein resides in the mitochondrion matrix. It carries out the reaction Hydrolysis of proteins in presence of ATP.. Its function is as follows. ATP-dependent serine protease that mediates the selective degradation of misfolded, unassembled or oxidatively damaged polypeptides as well as certain short-lived regulatory proteins in the mitochondrial matrix. May also have a chaperone function in the assembly of inner membrane protein complexes. Participates in the regulation of mitochondrial gene expression and in the maintenance of the integrity of the mitochondrial genome. Binds to mitochondrial DNA in a site-specific manner. This is Lon protease homolog, mitochondrial from Candida dubliniensis (strain CD36 / ATCC MYA-646 / CBS 7987 / NCPF 3949 / NRRL Y-17841) (Yeast).